Consider the following 337-residue polypeptide: Holliday junction branch migration complex subunit RuvB (337 aa).

Positions 4–186 (ADRLIHPQII…FGIPLRLEFY (183 aa)) are large ATPase domain (RuvB-L). ATP is bound by residues arginine 26, glycine 67, lysine 70, threonine 71, threonine 72, 133–135 (EDY), arginine 176, tyrosine 186, and arginine 223. Threonine 71 is a Mg(2+) binding site. The tract at residues 187-257 (NVKDLSSIVA…IAEAALDMLD (71 aa)) is small ATPAse domain (RuvB-S). The head domain (RuvB-H) stretch occupies residues 260–337 (AEGFDYMDRK…NHFNIIKPDA (78 aa)). Arginine 296, arginine 315, and arginine 320 together coordinate DNA.

This sequence belongs to the RuvB family. As to quaternary structure, homohexamer. Forms an RuvA(8)-RuvB(12)-Holliday junction (HJ) complex. HJ DNA is sandwiched between 2 RuvA tetramers; dsDNA enters through RuvA and exits via RuvB. An RuvB hexamer assembles on each DNA strand where it exits the tetramer. Each RuvB hexamer is contacted by two RuvA subunits (via domain III) on 2 adjacent RuvB subunits; this complex drives branch migration. In the full resolvosome a probable DNA-RuvA(4)-RuvB(12)-RuvC(2) complex forms which resolves the HJ.

The protein resides in the cytoplasm. The catalysed reaction is ATP + H2O = ADP + phosphate + H(+). In terms of biological role, the RuvA-RuvB-RuvC complex processes Holliday junction (HJ) DNA during genetic recombination and DNA repair, while the RuvA-RuvB complex plays an important role in the rescue of blocked DNA replication forks via replication fork reversal (RFR). RuvA specifically binds to HJ cruciform DNA, conferring on it an open structure. The RuvB hexamer acts as an ATP-dependent pump, pulling dsDNA into and through the RuvAB complex. RuvB forms 2 homohexamers on either side of HJ DNA bound by 1 or 2 RuvA tetramers; 4 subunits per hexamer contact DNA at a time. Coordinated motions by a converter formed by DNA-disengaged RuvB subunits stimulates ATP hydrolysis and nucleotide exchange. Immobilization of the converter enables RuvB to convert the ATP-contained energy into a lever motion, pulling 2 nucleotides of DNA out of the RuvA tetramer per ATP hydrolyzed, thus driving DNA branch migration. The RuvB motors rotate together with the DNA substrate, which together with the progressing nucleotide cycle form the mechanistic basis for DNA recombination by continuous HJ branch migration. Branch migration allows RuvC to scan DNA until it finds its consensus sequence, where it cleaves and resolves cruciform DNA. In Shewanella halifaxensis (strain HAW-EB4), this protein is Holliday junction branch migration complex subunit RuvB.